Consider the following 485-residue polypeptide: Protein nucleotidyltransferase YdiU (485 aa).

8 residues coordinate ATP: Gly90, Gly92, Arg93, Lys113, Asp125, Gly126, Arg176, and Arg183. Catalysis depends on Asp252, which acts as the Proton acceptor. Residues Asn253 and Asp262 each coordinate Mg(2+). Position 262 (Asp262) interacts with ATP.

Belongs to the SELO family. Requires Mg(2+) as cofactor. Mn(2+) serves as cofactor.

The catalysed reaction is L-seryl-[protein] + ATP = 3-O-(5'-adenylyl)-L-seryl-[protein] + diphosphate. The enzyme catalyses L-threonyl-[protein] + ATP = 3-O-(5'-adenylyl)-L-threonyl-[protein] + diphosphate. It catalyses the reaction L-tyrosyl-[protein] + ATP = O-(5'-adenylyl)-L-tyrosyl-[protein] + diphosphate. It carries out the reaction L-histidyl-[protein] + UTP = N(tele)-(5'-uridylyl)-L-histidyl-[protein] + diphosphate. The catalysed reaction is L-seryl-[protein] + UTP = O-(5'-uridylyl)-L-seryl-[protein] + diphosphate. The enzyme catalyses L-tyrosyl-[protein] + UTP = O-(5'-uridylyl)-L-tyrosyl-[protein] + diphosphate. Nucleotidyltransferase involved in the post-translational modification of proteins. It can catalyze the addition of adenosine monophosphate (AMP) or uridine monophosphate (UMP) to a protein, resulting in modifications known as AMPylation and UMPylation. In Aliivibrio fischeri (strain ATCC 700601 / ES114) (Vibrio fischeri), this protein is Protein nucleotidyltransferase YdiU.